We begin with the raw amino-acid sequence, 229 residues long: MGQKIHPLGFRLGITQEHRSKWYAKASDYPRLVLEDKKLRDNLFKQYPKANIVDIIIKRRQTTQDLETKESVDVIEVSIYTAVPGKIIGRSKATITELKESLEKLCQLDRMKHNLPQIRIILTILKVQNPYSSASVIADYLIEQLEQRIPFRAALKKALERIRLAKLEGIKIEISGRLNGAEIARSEWVRKGRVPLQTLRADIDYSAKTAKTIYGILGIKVWAFKGERT.

Residues 39 to 128 enclose the KH type-2 domain; the sequence is LRDNLFKQYP…RIILTILKVQ (90 aa).

The protein belongs to the universal ribosomal protein uS3 family. In terms of assembly, part of the 30S ribosomal subunit.

The protein resides in the plastid. Its subcellular location is the chloroplast. In Tupiella akineta (Green alga), this protein is Small ribosomal subunit protein uS3c (rps3).